We begin with the raw amino-acid sequence, 223 residues long: UPF0441 protein YgiB (223 aa).

Residues 178–195 (TVPKTAMAPKPATTTTVT) are compositionally biased toward low complexity. The tract at residues 178–223 (TVPKTAMAPKPATTTTVTRGGFGESVAKQSTMQRSAAGTSTRSMGG) is disordered. A compositionally biased stretch (polar residues) spans 204 to 223 (AKQSTMQRSAAGTSTRSMGG).

It belongs to the UPF0441 family.

The sequence is that of UPF0441 protein YgiB from Salmonella paratyphi A (strain ATCC 9150 / SARB42).